Reading from the N-terminus, the 652-residue chain is DNA polymerase epsilon subunit B (652 aa).

Belongs to the DNA polymerase epsilon subunit B family. In terms of assembly, heterotetramer. Consists of four subunits: POL2, DPB2, DPB3 and DPB4.

It is found in the nucleus. In terms of biological role, as accessory component of the DNA polymerase epsilon (DNA polymerase II) participates in chromosomal DNA replication. In Yarrowia lipolytica (strain CLIB 122 / E 150) (Yeast), this protein is DNA polymerase epsilon subunit B (DPB2).